We begin with the raw amino-acid sequence, 501 residues long: Lysine--tRNA ligase (501 aa).

Mg(2+) contacts are provided by Glu412 and Glu419.

Belongs to the class-II aminoacyl-tRNA synthetase family. In terms of assembly, homodimer. Mg(2+) is required as a cofactor.

It is found in the cytoplasm. It carries out the reaction tRNA(Lys) + L-lysine + ATP = L-lysyl-tRNA(Lys) + AMP + diphosphate. In Pasteurella multocida (strain Pm70), this protein is Lysine--tRNA ligase (lysS).